A 517-amino-acid polypeptide reads, in one-letter code: uncharacterized protein (517 aa).

10 consecutive transmembrane segments (helical) span residues 35–55 (FSLIVLSFIVSFFLIVAIPGI), 81–101 (IAIYTLAALAFSFCMSVGVFN), 102–122 (IGISGQMMAGANFGFMMILKV), 135–155 (IITILLMILGSVTVAMVVAAL), 164–184 (VVSAIMLNWVIVLVSAYLVGT), 223–243 (LVIAIAAAIFIAVLMKFTVFG), 268–288 (FLSFVISGILSGLLAAVVYTA), 302–322 (FGITSVPITGFDGIAIGLIAL), 328–348 (IVIVSTIISFVTIGAKPAGLN), and 352–372 (ASLVLGIMMYFAAIYNLMIYI).

The protein localises to the cell membrane. This is an uncharacterized protein from Mycoplasma pneumoniae (strain ATCC 29342 / M129 / Subtype 1) (Mycoplasmoides pneumoniae).